A 324-amino-acid polypeptide reads, in one-letter code: 3'-5' exoribonuclease YhaM (324 aa).

In terms of domain architecture, HD spans 163-279; the sequence is HVVSMLELAK…LHYIDNLDAK (117 aa).

Belongs to the YhaM family.

Shows a 3'-5' exoribonuclease activity. This Geobacillus sp. (strain WCH70) protein is 3'-5' exoribonuclease YhaM.